A 428-amino-acid polypeptide reads, in one-letter code: Tol-Pal system protein TolB (428 aa).

Positions 1–24 are cleaved as a signal peptide; it reads MPSLKTLLRGVLVAAMLVAGSARA.

Belongs to the TolB family. The Tol-Pal system is composed of five core proteins: the inner membrane proteins TolA, TolQ and TolR, the periplasmic protein TolB and the outer membrane protein Pal. They form a network linking the inner and outer membranes and the peptidoglycan layer.

The protein localises to the periplasm. Its function is as follows. Part of the Tol-Pal system, which plays a role in outer membrane invagination during cell division and is important for maintaining outer membrane integrity. The protein is Tol-Pal system protein TolB of Chromobacterium violaceum (strain ATCC 12472 / DSM 30191 / JCM 1249 / CCUG 213 / NBRC 12614 / NCIMB 9131 / NCTC 9757 / MK).